A 541-amino-acid polypeptide reads, in one-letter code: Propionyl-CoA carboxylase beta chain, mitochondrial (541 aa).

A mitochondrion-targeting transit peptide spans 1-28; sequence MAAVIRIRAMAAGTRLRVLNCGLGTTIR. Positions 34–292 constitute a CoA carboxyltransferase N-terminal domain; that stretch reads PVSVNERIEN…SNQDPASIRE (259 aa). The interval 34–535 is carboxyltransferase; that stretch reads PVSVNERIEN…SKKVHRPWRK (502 aa). Ser73 carries the phosphoserine modification. Lys101 is modified (N6-acetyllysine; alternate). Lys101 bears the N6-succinyllysine; alternate mark. Residue Lys250 is modified to N6-succinyllysine. One can recognise a CoA carboxyltransferase C-terminal domain in the interval 296-535; it reads PSDRLVPELD…SKKVHRPWRK (240 aa). The acyl-CoA binding stretch occupies residues 327–360; the sequence is DEREFFEIMPNYAKNIVIGFARMNGRTVGIVGNQ. Lys476 and Lys491 each carry N6-acetyllysine; alternate. N6-succinyllysine; alternate occurs at positions 476 and 491.

Belongs to the AccD/PCCB family. As to quaternary structure, the holoenzyme is a dodecamer composed of 6 PCCA/alpha subunits and 6 PCCB/beta subunits.

It localises to the mitochondrion matrix. It catalyses the reaction propanoyl-CoA + hydrogencarbonate + ATP = (S)-methylmalonyl-CoA + ADP + phosphate + H(+). The enzyme catalyses butanoyl-CoA + hydrogencarbonate + ATP = (2S)-ethylmalonyl-CoA + ADP + phosphate + H(+). Its pathway is metabolic intermediate metabolism; propanoyl-CoA degradation; succinyl-CoA from propanoyl-CoA: step 1/3. This is one of the 2 subunits of the biotin-dependent propionyl-CoA carboxylase (PCC), a mitochondrial enzyme involved in the catabolism of odd chain fatty acids, branched-chain amino acids isoleucine, threonine, methionine, and valine and other metabolites. Propionyl-CoA carboxylase catalyzes the carboxylation of propionyl-CoA/propanoyl-CoA to D-methylmalonyl-CoA/(S)-methylmalonyl-CoA. Within the holoenzyme, the alpha subunit catalyzes the ATP-dependent carboxylation of the biotin carried by the biotin carboxyl carrier (BCC) domain, while the beta subunit then transfers the carboxyl group from carboxylated biotin to propionyl-CoA. Propionyl-CoA carboxylase also significantly acts on butyryl-CoA/butanoyl-CoA, which is converted to ethylmalonyl-CoA/(2S)-ethylmalonyl-CoA. Other alternative minor substrates include (2E)-butenoyl-CoA/crotonoyl-CoA. This is Propionyl-CoA carboxylase beta chain, mitochondrial from Rattus norvegicus (Rat).